The primary structure comprises 165 residues: Cyclic pyranopterin monophosphate synthase (165 aa).

Residues 76–78 (LCH) and 114–115 (ME) contribute to the substrate site. Aspartate 129 is an active-site residue.

This sequence belongs to the MoaC family. Homohexamer; trimer of dimers.

It catalyses the reaction (8S)-3',8-cyclo-7,8-dihydroguanosine 5'-triphosphate = cyclic pyranopterin phosphate + diphosphate. The protein operates within cofactor biosynthesis; molybdopterin biosynthesis. Catalyzes the conversion of (8S)-3',8-cyclo-7,8-dihydroguanosine 5'-triphosphate to cyclic pyranopterin monophosphate (cPMP). In Brucella canis (strain ATCC 23365 / NCTC 10854 / RM-666), this protein is Cyclic pyranopterin monophosphate synthase.